Consider the following 445-residue polypeptide: Selenocysteine lyase (445 aa).

Methionine 1 is subject to N-acetylmethionine. The interval 1 to 28 (MEAAVAPGRDAPAPAASQPSGCGKHNSP) is disordered. The residue at position 129 (serine 129) is a Phosphoserine. At lysine 259 the chain carries N6-(pyridoxal phosphate)lysine. Cysteine 388 (S-selanylcysteine intermediate) is an active-site residue.

It belongs to the class-V pyridoxal-phosphate-dependent aminotransferase family. In terms of assembly, homodimer. Requires pyridoxal 5'-phosphate as cofactor.

The protein resides in the cytoplasm. It is found in the cytosol. It catalyses the reaction L-selenocysteine + AH2 = hydrogenselenide + L-alanine + A + H(+). Catalyzes the decomposition of L-selenocysteine to L-alanine and elemental selenium. In Homo sapiens (Human), this protein is Selenocysteine lyase (SCLY).